The chain runs to 240 residues: MIKQFFSNVYEGIKHYSNYLWELSKKQLIKIYLNKKHLIWKISIILICAFIVLLTSFLTRNSILNATQSYWELIPGFLVINITGNTGVSFGTLGDSNPSLVYFVQSIPIVLGFFVLLFSSNYLLDIGVSLVFFGGLSNIIDRSIVDNYKYLSGISTNNAVVDYFQFPFIKNSAIFNFPDTFVIIGMIFVGIQIIISFVKDYKKEKDSEENKKPIKDVVLDEERNKTKKEPIKKPIVIQKS.

4 helical membrane passes run 38–58 (LIWKISIILICAFIVLLTSFL), 73–93 (LIPGFLVINITGNTGVSFGTL), 98–118 (PSLVYFVQSIPIVLGFFVLLF), and 120–140 (SNYLLDIGVSLVFFGGLSNII). Residues D162 and D179 contribute to the active site. The chain crosses the membrane as a helical span at residues 177–197 (FPDTFVIIGMIFVGIQIIISF).

It belongs to the peptidase A8 family.

The protein resides in the cell membrane. The catalysed reaction is Release of signal peptides from bacterial membrane prolipoproteins. Hydrolyzes -Xaa-Yaa-Zaa-|-(S,diacylglyceryl)Cys-, in which Xaa is hydrophobic (preferably Leu), and Yaa (Ala or Ser) and Zaa (Gly or Ala) have small, neutral side chains.. Its pathway is protein modification; lipoprotein biosynthesis (signal peptide cleavage). In terms of biological role, this protein specifically catalyzes the removal of signal peptides from prolipoproteins. In Malacoplasma penetrans (strain HF-2) (Mycoplasma penetrans), this protein is Lipoprotein signal peptidase.